A 171-amino-acid chain; its full sequence is uncharacterized protein (171 aa).

Disordered regions lie at residues methionine 1 to lysine 41 and aspartate 114 to arginine 147. Residues alanine 27–serine 38 show a composition bias toward low complexity. Residues leucine 116 to methionine 125 are compositionally biased toward polar residues.

This is an uncharacterized protein from Mus musculus (Mouse).